Consider the following 299-residue polypeptide: Epimerase family protein SH2119 (299 aa).

This sequence belongs to the NAD(P)-dependent epimerase/dehydratase family. SDR39U1 subfamily.

This Staphylococcus haemolyticus (strain JCSC1435) protein is Epimerase family protein SH2119.